A 341-amino-acid polypeptide reads, in one-letter code: Killer cell immunoglobulin-like receptor 2DL3 (341 aa).

The first 21 residues, 1–21, serve as a signal peptide directing secretion; sequence MSLMVVSMVCVGFFLLQGAWP. The Extracellular portion of the chain corresponds to 22-245; it reads HEGVHRKPSL…SETGNPRHLH (224 aa). Ig-like C2-type domains follow at residues 42-107 and 142-205; these read EETV…VTHS and GESV…FRDS. 2 disulfide bridges follow: C49/C100 and C149/C198. N-linked (GlcNAc...) asparagine glycosylation is found at N84, N178, and N211. The tract at residues 220 to 239 is disordered; the sequence is VTGNPSNSWPSPTEPSSETG. A compositionally biased stretch (low complexity) spans 223–239; the sequence is NPSNSWPSPTEPSSETG. Residues 246 to 265 form a helical membrane-spanning segment; that stretch reads VLIGTSVVIILFILLLFFLL. The Cytoplasmic portion of the chain corresponds to 266–341; it reads HRWCCNKKNA…VYTELPNAEP (76 aa).

Belongs to the immunoglobulin superfamily. In terms of assembly, interacts with ARRB2.

It localises to the cell membrane. Receptor on natural killer (NK) cells for HLA-C alleles (HLA-Cw1, HLA-Cw3 and HLA-Cw7). Inhibits the activity of NK cells thus preventing cell lysis. The protein is Killer cell immunoglobulin-like receptor 2DL3 of Homo sapiens (Human).